The sequence spans 250 residues: MHILLANDDGYLAPGLAVLHAALAPLGRITVIAPEQNHSGASNSLTLQRPLSVYEAREGVQKGFRFVNGTPTDCVHIALTGLLEDKPDLVVSGINQGQNMGEDVLYSGTVAAAIEGYLLGIPSVAFSQVDKGWEHLDAAARVARTVVERIIGTPPAEPFLLNVNIPNLPFEHIRGYRATRLGKRHPSQPVITQVNPRGDTNYWIGPAGDARDASEGTDFHATAQGYVSLTPLQLDLTHRGQLDALDQWLK.

A divalent metal cation-binding residues include D8, D9, S39, and N95.

This sequence belongs to the SurE nucleotidase family. A divalent metal cation is required as a cofactor.

Its subcellular location is the cytoplasm. It carries out the reaction a ribonucleoside 5'-phosphate + H2O = a ribonucleoside + phosphate. Nucleotidase that shows phosphatase activity on nucleoside 5'-monophosphates. This chain is 5'-nucleotidase SurE, found in Cupriavidus taiwanensis (strain DSM 17343 / BCRC 17206 / CCUG 44338 / CIP 107171 / LMG 19424 / R1) (Ralstonia taiwanensis (strain LMG 19424)).